Consider the following 330-residue polypeptide: Protein pelota homolog (330 aa).

Belongs to the eukaryotic release factor 1 family. Pelota subfamily. In terms of assembly, monomer. A divalent metal cation is required as a cofactor.

It is found in the cytoplasm. Its function is as follows. May function in recognizing stalled ribosomes, interact with stem-loop structures in stalled mRNA molecules, and effect endonucleolytic cleavage of the mRNA. May play a role in the release non-functional ribosomes and degradation of damaged mRNAs. Has endoribonuclease activity. In Pyrobaculum islandicum (strain DSM 4184 / JCM 9189 / GEO3), this protein is Protein pelota homolog.